Here is a 330-residue protein sequence, read N- to C-terminus: MNVYYEQDADLGRLQGKNIAVLGYGSQGHAHALNLKDSGMNVCVGLRPDSSSCAKAREAGLRVEPVADAVKWADIVMVLLPDQTQKAVYEAEIAPNMVAGNTLAFGHGFNIHYNQIVPPADVDVIMIAPKSPGHLVRRTYTEGNGVPCLIAVHQDATGEAKKTALAWAKGIGGTKAGVIETNFKDETETDLFGEQAVLCGGSAELIKAGFETLVEAGYPEELAYFECMHELKLIVDLYYEGGLSRMNYSVSDTAEYGGMTRGPRLITSAVKAEMKKVLEEVQDGRFAREFIDECNGGYKNLNRLREENSGHAIEKVGAKLRNMMSWLVRK.

One can recognise a KARI N-terminal Rossmann domain in the interval 1-181 (MNVYYEQDAD…GGTKAGVIET (181 aa)). NADP(+) contacts are provided by residues 24–27 (YGSQ), Arg-47, Ser-50, Ser-52, and 82–85 (DQTQ). The active site involves His-107. Gly-133 is a binding site for NADP(+). A KARI C-terminal knotted domain is found at 182-327 (NFKDETETDL…AKLRNMMSWL (146 aa)). 4 residues coordinate Mg(2+): Asp-190, Glu-194, Glu-226, and Glu-230. Ser-251 contacts substrate.

The protein belongs to the ketol-acid reductoisomerase family. Requires Mg(2+) as cofactor.

The enzyme catalyses (2R)-2,3-dihydroxy-3-methylbutanoate + NADP(+) = (2S)-2-acetolactate + NADPH + H(+). It carries out the reaction (2R,3R)-2,3-dihydroxy-3-methylpentanoate + NADP(+) = (S)-2-ethyl-2-hydroxy-3-oxobutanoate + NADPH + H(+). It functions in the pathway amino-acid biosynthesis; L-isoleucine biosynthesis; L-isoleucine from 2-oxobutanoate: step 2/4. The protein operates within amino-acid biosynthesis; L-valine biosynthesis; L-valine from pyruvate: step 2/4. Its function is as follows. Involved in the biosynthesis of branched-chain amino acids (BCAA). Catalyzes an alkyl-migration followed by a ketol-acid reduction of (S)-2-acetolactate (S2AL) to yield (R)-2,3-dihydroxy-isovalerate. In the isomerase reaction, S2AL is rearranged via a Mg-dependent methyl migration to produce 3-hydroxy-3-methyl-2-ketobutyrate (HMKB). In the reductase reaction, this 2-ketoacid undergoes a metal-dependent reduction by NADPH to yield (R)-2,3-dihydroxy-isovalerate. The chain is Ketol-acid reductoisomerase (NADP(+)) from Chlorobium luteolum (strain DSM 273 / BCRC 81028 / 2530) (Pelodictyon luteolum).